The following is a 316-amino-acid chain: Glutathione synthetase (316 aa).

One can recognise an ATP-grasp domain in the interval 125–310 (KLFTAWFSDL…ITGMLMDAIE (186 aa)). Residue 151-207 (WEKHSDIILKPLDGMGGASIFRVKEGDPNLGVIAETLTEHGTRYCMAQNYLPAIKDG) participates in ATP binding. Mg(2+) contacts are provided by E281 and N283.

It belongs to the prokaryotic GSH synthase family. Requires Mg(2+) as cofactor. Mn(2+) is required as a cofactor.

It carries out the reaction gamma-L-glutamyl-L-cysteine + glycine + ATP = glutathione + ADP + phosphate + H(+). It functions in the pathway sulfur metabolism; glutathione biosynthesis; glutathione from L-cysteine and L-glutamate: step 2/2. The sequence is that of Glutathione synthetase from Escherichia coli O6:H1 (strain CFT073 / ATCC 700928 / UPEC).